Here is a 390-residue protein sequence, read N- to C-terminus: Dual-specificity RNA methyltransferase RlmN (390 aa).

The Proton acceptor role is filled by glutamate 110. Residues 116 to 355 enclose the Radical SAM core domain; sequence EADRATLCVS…VIIRKTRGDD (240 aa). A disulfide bridge links cysteine 123 with cysteine 360. [4Fe-4S] cluster-binding residues include cysteine 130, cysteine 134, and cysteine 137. S-adenosyl-L-methionine is bound by residues 184–185, serine 216, 238–240, and asparagine 317; these read GE and SLH. Cysteine 360 serves as the catalytic S-methylcysteine intermediate.

Belongs to the radical SAM superfamily. RlmN family. It depends on [4Fe-4S] cluster as a cofactor.

The protein resides in the cytoplasm. The catalysed reaction is adenosine(2503) in 23S rRNA + 2 reduced [2Fe-2S]-[ferredoxin] + 2 S-adenosyl-L-methionine = 2-methyladenosine(2503) in 23S rRNA + 5'-deoxyadenosine + L-methionine + 2 oxidized [2Fe-2S]-[ferredoxin] + S-adenosyl-L-homocysteine. The enzyme catalyses adenosine(37) in tRNA + 2 reduced [2Fe-2S]-[ferredoxin] + 2 S-adenosyl-L-methionine = 2-methyladenosine(37) in tRNA + 5'-deoxyadenosine + L-methionine + 2 oxidized [2Fe-2S]-[ferredoxin] + S-adenosyl-L-homocysteine. In terms of biological role, specifically methylates position 2 of adenine 2503 in 23S rRNA and position 2 of adenine 37 in tRNAs. m2A2503 modification seems to play a crucial role in the proofreading step occurring at the peptidyl transferase center and thus would serve to optimize ribosomal fidelity. The sequence is that of Dual-specificity RNA methyltransferase RlmN from Haemophilus influenzae (strain PittEE).